Reading from the N-terminus, the 211-residue chain is Endoplasmic reticulum vesicle protein 25 (211 aa).

The first 19 residues, 1 to 19 (MKSIVSVLTLLLLINAVAA), serve as a signal peptide directing secretion. The Lumenal portion of the chain corresponds to 20-180 (LRFVLPAKDK…TNESTNRRVK (161 aa)). In terms of domain architecture, GOLD spans 33–121 (PFCVRDFVKN…TKEIDLSVAI (89 aa)). Residues 181-201 (FFSVGITLALIALGVWQIIYL) form a helical membrane-spanning segment. The Cytoplasmic segment spans residues 202-211 (RSYFRSKHII).

This sequence belongs to the EMP24/GP25L family.

Its subcellular location is the endoplasmic reticulum membrane. The protein resides in the golgi apparatus membrane. Functionally, constituent of COPII-coated endoplasmic reticulum-derived transport vesicles. Required for efficient transport of a subset of secretory proteins to the Golgi. Facilitates retrograde transport from the Golgi to the endoplasmic reticulum. The chain is Endoplasmic reticulum vesicle protein 25 (ERV25) from Yarrowia lipolytica (strain CLIB 122 / E 150) (Yeast).